A 241-amino-acid chain; its full sequence is 2,3-bisphosphoglycerate-dependent phosphoglycerate mutase (241 aa).

The Tele-phosphohistidine intermediate role is filled by His12. Substrate contacts are provided by residues 24-25, Arg61, 117-120, and Lys128; these read SG and ERYY. Glu117 functions as the Proton donor/acceptor in the catalytic mechanism.

This sequence belongs to the phosphoglycerate mutase family. BPG-dependent PGAM subfamily.

It carries out the reaction (2R)-2-phosphoglycerate = (2R)-3-phosphoglycerate. Its pathway is carbohydrate degradation; glycolysis; pyruvate from D-glyceraldehyde 3-phosphate: step 3/5. In terms of biological role, catalyzes the interconversion of 2-phosphoglycerate and 3-phosphoglycerate. The polypeptide is 2,3-bisphosphoglycerate-dependent phosphoglycerate mutase (Methanosarcina mazei (strain ATCC BAA-159 / DSM 3647 / Goe1 / Go1 / JCM 11833 / OCM 88) (Methanosarcina frisia)).